Reading from the N-terminus, the 321-residue chain is Fimbria adhesin protein (321 aa).

A signal peptide spans 1–18 (MKKLTLFIGLMALGTTSA).

It belongs to the fimbrial protein family.

Its subcellular location is the fimbrium. This chain is Fimbria adhesin protein (mrkD), found in Klebsiella pneumoniae.